Reading from the N-terminus, the 119-residue chain is uncharacterized protein (119 aa).

Residues 63–104 are a coiled coil; it reads KKIKKELESNSEKRKAALQMIKEEHTAKVDRYKMIIEDLRQQ.

This is an uncharacterized protein from Bacillus subtilis (strain 168).